Consider the following 353-residue polypeptide: Phospho-furanose lactonase (353 aa).

His24, His26, Lys153, His186, and His214 together coordinate Zn(2+). An N6-carboxylysine modification is found at Lys153. 244–245 (KY) is a substrate binding site. Asp272 is a binding site for Zn(2+). A substrate-binding site is contributed by 275–278 (RILY).

Belongs to the metallo-dependent hydrolases superfamily. Phosphotriesterase family. Zn(2+) is required as a cofactor.

The enzyme catalyses a 1,4-lactone + H2O = a 4-hydroxyacid + H(+). It catalyses the reaction D-xylono-1,4-lactone 5-phosphate + H2O = 5-phospho-D-xylonate + H(+). It carries out the reaction L-arabino-1,4-lactone 5-phosphate + H2O = 5-phospho-L-arabinonate + H(+). In terms of biological role, catalyzes the hydrolysis of D-xylono-1,4-lactone-5-phosphate and L-arabino-1,4-lactone-5-phosphate. Also able to hydrolyze carboxy 1,4-lactones. The chain is Phospho-furanose lactonase from Mycoplasmopsis synoviae (strain 53) (Mycoplasma synoviae).